We begin with the raw amino-acid sequence, 658 residues long: MGSCSCTRRHFLLSICFLQVITIIERQVFDFLGYMWAPILVNFFHILFIIFGFYGAYHFRVKYIITYLIWNFLWIGWNTFLICFYLNVGQLNRDSDLLNLGTGSVSWFEANGYGCKPTYNMAADDTFRPQRPERVEGCLLDYPLVEITHSGVQCALALLGILGAILISCIFLDEDDRFDFMNGDAKSPQHTVVHPMYVSYTSIPTTSASATMQSNKHLQLQHQQPQQNSLKLYHHQQQQQPKLHHFNKNYQLSGSNNNTLNNNLHQRAPALLPPNTTNNRSASFQTQSHPSNNHVTQRTGGEGSNCSSLRRHRQHHSKALVSPSPMSPQTTPSLSYASLQNSSPYLAGNSLSNSNYSIFQSPDSLQGSSHFARIHHKPKPPKSDYPVSGEFNPGGNISSPVRPLDRLSRSLEDDEDNFSLQKFAPGEHGVTYVPFQSPTPNSLFLGENNNSQPHLVFHTNSRSSPNNNAYPYDQSGLPSSLRMGSNSNARRPTHIPLPTVPMHNCQEVENDEDADGESEQDHDQMLTPPPPPLVRPHIHQRLGQAPYLDLSPEVAERYAIPSKLGPSLPIQVPLPVPHGSPMVRRSNRRPRPSNPVNFCDQIRATPPGYVVRAQSDDRLMEQVEADAAPHVNRRSGRGGSGQKTRPRSFCNSIVGVQG.

A run of 4 helical transmembrane segments spans residues Met1–Thr22, Phe31–Phe51, Ile64–Phe84, and Val152–Leu172. Disordered regions lie at residues His222 to Pro241 and Lys248 to Ala337. Asn257, Asn275, and Asn279 each carry an N-linked (GlcNAc...) asparagine glycan. Polar residues predominate over residues Pro274 to Ser308. At Ser291 the chain carries Phosphoserine. Asn305 carries N-linked (GlcNAc...) asparagine glycosylation. Position 308 is a phosphoserine (Ser308). Residues Leu309–Lys318 show a composition bias toward basic residues. Low complexity predominate over residues Ser322–Ser335. Asn355 and Asn396 each carry an N-linked (GlcNAc...) asparagine glycan. Phosphoserine occurs at positions 398 and 399. 2 N-linked (GlcNAc...) asparagine glycosylation sites follow: Asn417 and Asn449. 2 disordered regions span residues Gln571–Gln601 and Glu621–Gly658.

Belongs to the NKAIN family. In terms of assembly, interacts with nrv1. As to expression, expressed in the brain.

The protein resides in the cell membrane. Functionally, induces a small but significant sodium conductance when expressed in Xenopus oocytes. The chain is Sodium/potassium-transporting ATPase subunit beta-1-interacting protein (NKAIN) from Drosophila melanogaster (Fruit fly).